We begin with the raw amino-acid sequence, 269 residues long: Phosphate import ATP-binding protein PstB 1 (269 aa).

The ABC transporter domain maps to 25–264 (LSTEDLHVFY…PQVDLTNDYI (240 aa)). 57 to 64 (GPSGSGKS) contributes to the ATP binding site.

It belongs to the ABC transporter superfamily. Phosphate importer (TC 3.A.1.7) family. In terms of assembly, the complex is composed of two ATP-binding proteins (PstB), two transmembrane proteins (PstC and PstA) and a solute-binding protein (PstS).

Its subcellular location is the cell membrane. The catalysed reaction is phosphate(out) + ATP + H2O = ADP + 2 phosphate(in) + H(+). Part of the ABC transporter complex PstSACB involved in phosphate import. Responsible for energy coupling to the transport system. The polypeptide is Phosphate import ATP-binding protein PstB 1 (Lactiplantibacillus plantarum (strain ATCC BAA-793 / NCIMB 8826 / WCFS1) (Lactobacillus plantarum)).